A 363-amino-acid chain; its full sequence is Phosphoserine aminotransferase (363 aa).

R42 serves as a coordination point for L-glutamate. Positions 105, 155, 175, and 198 each coordinate pyridoxal 5'-phosphate. Residue K199 is modified to N6-(pyridoxal phosphate)lysine. 240-241 serves as a coordination point for pyridoxal 5'-phosphate; sequence NT.

This sequence belongs to the class-V pyridoxal-phosphate-dependent aminotransferase family. SerC subfamily. In terms of assembly, homodimer. It depends on pyridoxal 5'-phosphate as a cofactor.

It is found in the cytoplasm. It carries out the reaction O-phospho-L-serine + 2-oxoglutarate = 3-phosphooxypyruvate + L-glutamate. The enzyme catalyses 4-(phosphooxy)-L-threonine + 2-oxoglutarate = (R)-3-hydroxy-2-oxo-4-phosphooxybutanoate + L-glutamate. It participates in amino-acid biosynthesis; L-serine biosynthesis; L-serine from 3-phospho-D-glycerate: step 2/3. The protein operates within cofactor biosynthesis; pyridoxine 5'-phosphate biosynthesis; pyridoxine 5'-phosphate from D-erythrose 4-phosphate: step 3/5. Functionally, catalyzes the reversible conversion of 3-phosphohydroxypyruvate to phosphoserine and of 3-hydroxy-2-oxo-4-phosphonooxybutanoate to phosphohydroxythreonine. In Janthinobacterium sp. (strain Marseille) (Minibacterium massiliensis), this protein is Phosphoserine aminotransferase.